The primary structure comprises 501 residues: Actin nucleation-promoting factor WASL (501 aa).

Ser-2 bears the N-acetylserine mark. A WH1 domain is found at 31–138 (LGKKCVTMSS…KAVTDLLGRR (108 aa)). A disordered region spans residues 135-158 (LGRRQRKSEKRRDAPNGPNLPMAT). The CRIB domain maps to 200–213 (IGTPSNFQHIGHVG). A Phosphoserine; by TNK2 modification is found at Ser-239. Tyr-253 bears the Phosphotyrosine; by FAK1 and TNK2 mark. Disordered stretches follow at residues 263-403 (EAVK…GNKA) and 442-501 (QLKS…EWED). Residues 273–387 (APPPPPPSRG…PPGPPPPPGL (115 aa)) show a composition bias toward pro residues. Arg-304 carries the omega-N-methylarginine modification. WH2 domains follow at residues 401–418 (NKAALLDQIREGAQLKKV) and 429–446 (GRDALLDQIRQGIQLKSV). The span at 442–453 (QLKSVSDGQEST) shows a compositional bias: polar residues. Phosphoserine is present on residues Ser-480 and Ser-481. Positions 482 to 501 (DEDEDDDDEEDFEDDDEWED) are enriched in acidic residues.

Binds actin and the Arp2/3 complex. Interacts with CDC42. Interacts with FCHSD1. Interacts with FCHSD2. Binds to SH3 domains of GRB2. Interacts with the C-terminal SH3 domain of DNMBP. Interacts with SNX9. Interacts with the WW domains of PRPF40A/FBP11. Interacts with PTK2/FAK1. Interacts with PACSIN1, PACSIN2 and PACSIN3. Interacts with NOSTRIN. Binds to TNK2. Interacts with SNX33. Interacts with NONO (via second RRM domain); the interaction is direct. Component of a multiprotein complex with NONO and SFPQ; associates with the complex via direct interaction with NONO. Phosphorylation at Ser-239, Tyr-253, Ser-480 and Ser-481 enhances actin polymerization activity.

Its subcellular location is the cytoplasm. The protein resides in the cytoskeleton. It localises to the nucleus. Functionally, regulates actin polymerization by stimulating the actin-nucleating activity of the Arp2/3 complex. Involved in various processes, such as mitosis and cytokinesis, via its role in the regulation of actin polymerization. Together with CDC42, involved in the extension and maintenance of the formation of thin, actin-rich surface projections called filopodia. In addition to its role in the cytoplasm, also plays a role in the nucleus by regulating gene transcription, probably by promoting nuclear actin polymerization. Binds to HSF1/HSTF1 and forms a complex on heat shock promoter elements (HSE) that negatively regulates HSP90 expression. Plays a role in dendrite spine morphogenesis. The sequence is that of Actin nucleation-promoting factor WASL (Wasl) from Mus musculus (Mouse).